A 214-amino-acid chain; its full sequence is Leucyl/phenylalanyl-tRNA--protein transferase (214 aa).

This sequence belongs to the L/F-transferase family.

The protein localises to the cytoplasm. The enzyme catalyses N-terminal L-lysyl-[protein] + L-leucyl-tRNA(Leu) = N-terminal L-leucyl-L-lysyl-[protein] + tRNA(Leu) + H(+). It catalyses the reaction N-terminal L-arginyl-[protein] + L-leucyl-tRNA(Leu) = N-terminal L-leucyl-L-arginyl-[protein] + tRNA(Leu) + H(+). It carries out the reaction L-phenylalanyl-tRNA(Phe) + an N-terminal L-alpha-aminoacyl-[protein] = an N-terminal L-phenylalanyl-L-alpha-aminoacyl-[protein] + tRNA(Phe). Functionally, functions in the N-end rule pathway of protein degradation where it conjugates Leu, Phe and, less efficiently, Met from aminoacyl-tRNAs to the N-termini of proteins containing an N-terminal arginine or lysine. This is Leucyl/phenylalanyl-tRNA--protein transferase from Cereibacter sphaeroides (strain ATCC 17029 / ATH 2.4.9) (Rhodobacter sphaeroides).